We begin with the raw amino-acid sequence, 526 residues long: MYDNLPPEIWTNIISYTNEFNLLFTNSNFFSLFNLINTKINIIEHVIKREHLSVQKYIDQLKKNCNEIVSKKFFNDLTLNECLFISCKRGRNDFVKYFVSKGANIRSRDNFAIKLACEHGHIEVVKYLIDNGVDIRSEKNYAVRIACNNGHIDIVKLLISKGANIRDYDNCAIKWASENGHIEIVKILVSQGYDSTSNFNEPVILAVKNGHLEVVKYLVSQSDRCRNNSAIISAAENGHIEIVKFLASRGSNIRIDDDYTIRIASGNGHLEVVKFLVSKGCNIRSEIDHAVQWASTNGHLEVVEYLVSQGADIKSEYDRSVRCASQNGHIEVVKYLVSQGANIRNINDYAVRYASENGHIEVVEYLVSQGANIRVDNDSPLLRACLKGHIKVVKFLVSSGADIRVNNYQPLLIAAGNGHLEILKYLVSQGVNVSIINVPLVGIACIDGYGYFEIVKYLVSIGADINLADDMAIRLASEYGHLDIVKYLVENGANVRAENDYAIKQAHRKGHQEVVNYLLSKGAILS.

ANK repeat units follow at residues 78 to 107 (TLNECLFISCKRGRNDFVKYFVSKGANIRS), 108 to 137 (RDNFAIKLACEHGHIEVVKYLIDNGVDIRS), 139 to 167 (KNYAVRIACNNGHIDIVKLLISKGANIRD), 169 to 197 (DNCAIKWASENGHIEIVKILVSQGYDSTS), 198 to 227 (NFNEPVILAVKNGHLEVVKYLVSQSDRCRN), 229 to 255 (SAIISAAENGHIEIVKFLASRGSNIRI), 256 to 285 (DDDYTIRIASGNGHLEVVKFLVSKGCNIRS), 286 to 315 (EIDHAVQWASTNGHLEVVEYLVSQGADIKS), 317 to 345 (YDRSVRCASQNGHIEVVKYLVSQGANIRN), 346 to 375 (INDYAVRYASENGHIEVVEYLVSQGANIRV), 376 to 405 (DNDSPLLRACLKGHIKVVKFLVSSGADIRV), 406 to 435 (NNYQPLLIAAGNGHLEILKYLVSQGVNVSI), 437 to 467 (NVPLVGIACIDGYGYFEIVKYLVSIGADINL), 468 to 497 (ADDMAIRLASEYGHLDIVKYLVENGANVRA), and 499 to 526 (NDYAIKQAHRKGHQEVVNYLLSKGAILS).

The sequence is that of Putative ankyrin repeat protein R840 from Acanthamoeba polyphaga (Amoeba).